Reading from the N-terminus, the 498-residue chain is ATP synthase subunit beta, chloroplastic (498 aa).

Position 172–179 (172–179) interacts with ATP; the sequence is GGAGVGKT.

It belongs to the ATPase alpha/beta chains family. F-type ATPases have 2 components, CF(1) - the catalytic core - and CF(0) - the membrane proton channel. CF(1) has five subunits: alpha(3), beta(3), gamma(1), delta(1), epsilon(1). CF(0) has four main subunits: a(1), b(1), b'(1) and c(9-12).

The protein resides in the plastid. It localises to the chloroplast thylakoid membrane. It carries out the reaction ATP + H2O + 4 H(+)(in) = ADP + phosphate + 5 H(+)(out). In terms of biological role, produces ATP from ADP in the presence of a proton gradient across the membrane. The catalytic sites are hosted primarily by the beta subunits. The sequence is that of ATP synthase subunit beta, chloroplastic from Coffea arabica (Arabian coffee).